The sequence spans 83 residues: Host transcription reprogramming factor 9 (83 aa).

An N-terminal signal peptide occupies residues 1–19 (MQFSKITLAIVLYALGTAA). The C2H2-type zinc finger occupies 54–77 (YRCDKCEKEFVKGNDFFNHGGRGH).

It localises to the secreted. Its subcellular location is the host nucleus. Probable secreted effector that translocates into the nuclei of host cells to reprogram the expression of targeted genes by binding on effector binding elements in rice. The polypeptide is Host transcription reprogramming factor 9 (Pyricularia oryzae (strain 70-15 / ATCC MYA-4617 / FGSC 8958) (Rice blast fungus)).